The chain runs to 715 residues: ATP-dependent zinc metalloprotease YME1L1 (715 aa).

At 1–237 (MFSLSSTVQP…TNDSLRRTRL (237 aa)) the chain is on the mitochondrial matrix side. Residues 34–54 (NTPVSQKQHRDTVPEHEAPSS) are disordered. Positions 41-52 (QHRDTVPEHEAP) are enriched in basic and acidic residues. The helical transmembrane segment at 238 to 258 (ILFVLLLFGIYGLLKNPFLSV) threads the bilayer. Over 259–715 (RFRTTTGLDS…VLEGKKLEVR (457 aa)) the chain is Mitochondrial intermembrane. ATP-binding residues include V283, T325, G326, K327, T328, and L329. A Zn(2+)-binding site is contributed by H541. E542 is an active-site residue. Residues H545 and D619 each contribute to the Zn(2+) site.

This sequence in the N-terminal section; belongs to the AAA ATPase family. In the C-terminal section; belongs to the peptidase M41 family. As to quaternary structure, homohexamer; may also form heterohexamers. Exists in several complexes of 600-1100 kDa. Interacts with AFG1L. Zn(2+) serves as cofactor. Post-translationally, proteolytically processed by mitochondrial processing peptidase (MPP) to generate the mature form. Degraded in an OMA1-dependent manner in response to oxidative stress. As to expression, detected in heart and skeletal muscle (at protein level).

The protein localises to the mitochondrion inner membrane. It is found in the mitochondrion. It carries out the reaction ATP + H2O = ADP + phosphate + H(+). In terms of biological role, ATP-dependent metalloprotease that catalyzes the degradation of folded and unfolded proteins with a suitable degron sequence in the mitochondrial intermembrane region. Plays an important role in regulating mitochondrial morphology and function by cleaving OPA1 at position S2, giving rise to a form of OPA1 that promotes maintenance of normal mitochondrial structure and mitochondrial protein metabolism. Ensures cell proliferation, maintains normal cristae morphology and complex I respiration activity, promotes antiapoptotic activity and protects mitochondria from the accumulation of oxidatively damaged membrane proteins. Required to control the accumulation of nonassembled respiratory chain subunits (NDUFB6, OX4 and ND1). Involved in the mitochondrial adaptation in response to various signals, such as stress or developmental cues, by mediating degradation of mitochondrial proteins to rewire the mitochondrial proteome. Catalyzes degradation of mitochondrial proteins, such as translocases, lipid transfer proteins and metabolic enzymes in response to nutrient starvation in order to limit mitochondrial biogenesis: mechanistically, YME1L is activated by decreased phosphatidylethanolamine levels caused by LPIN1 activity in response to mTORC1 inhibition. Acts as a regulator of adult neural stem cell self-renewal by promoting mitochondrial proteome rewiring, preserving neural stem and progenitor cells self-renewal. Required for normal, constitutive degradation of PRELID1. Catalyzes the degradation of OMA1 in response to membrane depolarization. Mediates degradation of TIMM17A downstream of the integrated stress response (ISR). Catalyzes degradation of MICU1 when MICU1 is not assembled via an interchain disulfide. This chain is ATP-dependent zinc metalloprotease YME1L1 (Yme1l1), found in Mus musculus (Mouse).